A 569-amino-acid chain; its full sequence is Urease subunit beta (569 aa).

A Urease domain is found at 131 to 569; sequence GGIDTHIHFI…LSLAQLYNLF (439 aa). Residues H136, H138, and K219 each coordinate Ni(2+). K219 is subject to N6-carboxylysine. H221 is a substrate binding site. Positions 248 and 274 each coordinate Ni(2+). The Proton donor role is filled by H322. Position 362 (D362) interacts with Ni(2+).

Belongs to the metallo-dependent hydrolases superfamily. Urease alpha subunit family. Heterohexamer of 3 UreA (alpha) and 3 UreB (beta) subunits. It depends on Ni cation as a cofactor. Post-translationally, carboxylation allows a single lysine to coordinate two nickel ions.

It is found in the cytoplasm. It carries out the reaction urea + 2 H2O + H(+) = hydrogencarbonate + 2 NH4(+). Its pathway is nitrogen metabolism; urea degradation; CO(2) and NH(3) from urea (urease route): step 1/1. This is Urease subunit beta from Helicobacter felis (strain ATCC 49179 / CCUG 28539 / NCTC 12436 / CS1).